Reading from the N-terminus, the 775-residue chain is Thiamine repressible genes regulatory protein thi1 (775 aa).

A DNA-binding region (zn(2)-C6 fungal-type) is located at residues 39 to 65 (CKHCRQKKIKCNGGQPCISCKTLNIEC). Serine 208 bears the Phosphoserine mark. Disordered stretches follow at residues 676 to 695 (LTGESSNGSNSTPNEAFQPF) and 754 to 775 (NVSEQSSHTAEQTSNLTLEKNG).

Its subcellular location is the nucleus. Its function is as follows. Transcription factor that activates the nmt1 promoter. Regulation of thiamine repressible genes. Positively regulates conjugation during meiosis. This chain is Thiamine repressible genes regulatory protein thi1 (thi1), found in Schizosaccharomyces pombe (strain 972 / ATCC 24843) (Fission yeast).